Consider the following 340-residue polypeptide: Ketol-acid reductoisomerase (NADP(+)) (340 aa).

One can recognise a KARI N-terminal Rossmann domain in the interval 3–182 (VEMLYEADVK…GSARVGLLVT (180 aa)). NADP(+) contacts are provided by residues 26 to 29 (YGSQ), arginine 49, serine 53, and 83 to 86 (DEIQ). The active site involves histidine 108. Position 134 (glycine 134) interacts with NADP(+). Residues 183-328 (TFKEETEEDL…AELRKAMPFV (146 aa)) form the KARI C-terminal knotted domain. Positions 191, 195, 227, and 231 each coordinate Mg(2+). Serine 252 contacts substrate.

It belongs to the ketol-acid reductoisomerase family. Mg(2+) serves as cofactor.

It carries out the reaction (2R)-2,3-dihydroxy-3-methylbutanoate + NADP(+) = (2S)-2-acetolactate + NADPH + H(+). It catalyses the reaction (2R,3R)-2,3-dihydroxy-3-methylpentanoate + NADP(+) = (S)-2-ethyl-2-hydroxy-3-oxobutanoate + NADPH + H(+). The protein operates within amino-acid biosynthesis; L-isoleucine biosynthesis; L-isoleucine from 2-oxobutanoate: step 2/4. It participates in amino-acid biosynthesis; L-valine biosynthesis; L-valine from pyruvate: step 2/4. Its function is as follows. Involved in the biosynthesis of branched-chain amino acids (BCAA). Catalyzes an alkyl-migration followed by a ketol-acid reduction of (S)-2-acetolactate (S2AL) to yield (R)-2,3-dihydroxy-isovalerate. In the isomerase reaction, S2AL is rearranged via a Mg-dependent methyl migration to produce 3-hydroxy-3-methyl-2-ketobutyrate (HMKB). In the reductase reaction, this 2-ketoacid undergoes a metal-dependent reduction by NADPH to yield (R)-2,3-dihydroxy-isovalerate. In Streptococcus mutans serotype c (strain ATCC 700610 / UA159), this protein is Ketol-acid reductoisomerase (NADP(+)).